A 66-amino-acid polypeptide reads, in one-letter code: U10-theraphotoxin-Cg1a 3 (66 aa).

Positions 1–21 are cleaved as a signal peptide; it reads MKTSVLFVIFGLALLFCLSFA. Residues 22–29 constitute a propeptide that is removed on maturation; that stretch reads DELEDTGR. Cystine bridges form between C31-C46, C38-C51, and C45-C58.

This sequence belongs to the neurotoxin 10 (Hwtx-1) family. 29 (Jztx-13) subfamily. Expressed by the venom gland.

Its subcellular location is the secreted. Functionally, probable ion channel inhibitor. This chain is U10-theraphotoxin-Cg1a 3, found in Chilobrachys guangxiensis (Chinese earth tiger tarantula).